We begin with the raw amino-acid sequence, 937 residues long: Ubiquitin carboxyl-terminal hydrolase 37 (937 aa).

Positions 38-40 (RDN) match the KEN box 1 motif. 2 short sequence motifs (D-box) span residues 76–84 (RMTLTLKDS) and 101–110 (KEYLETVKLG). The span at 132-149 (TAQNDSGLSPSDKQSAPR) shows a compositional bias: polar residues. 2 disordered regions span residues 132–216 (TAQN…KAIT) and 232–258 (QSEE…SRTG). The segment covering 151 to 161 (SSLDSREDSTP) has biased composition (basic and acidic residues). Residues 162–170 (RKPLGSPSR) carry the D-box 3 motif. A KEN box 2 motif is present at residues 204–206 (KEN). A USP domain is found at 322–911 (QGFSNLGNTC…SGYIFFYMHK (590 aa)). Catalysis depends on cysteine 331, which acts as the Nucleophile. Over residues 609 to 625 (NSSTLRRASQRPESSGS) the composition is skewed to polar residues. Disordered stretches follow at residues 609–632 (NSST…DSDS) and 688–710 (TSLC…GDAD). One can recognise a UIM 1 domain in the interval 672 to 691 (NDEEMLAAVLEMSRHDTSLC). The short motif at 742–744 (KEN) is the KEN box 3 element. UIM domains are found at residues 766–785 (REEQ…QEAR) and 788–807 (REDD…FNNS). The Proton acceptor role is filled by histidine 866.

Belongs to the peptidase C19 family.

The catalysed reaction is Thiol-dependent hydrolysis of ester, thioester, amide, peptide and isopeptide bonds formed by the C-terminal Gly of ubiquitin (a 76-residue protein attached to proteins as an intracellular targeting signal).. Deubiquitinase that antagonizes the anaphase-promoting complex (APC/C) during G1/S transition by mediating deubiquitination of APC/C target proteins, thereby promoting S phase entry. Specifically mediates deubiquitination of 'Lys-11'-linked polyubiquitin chains, a specific ubiquitin-linkage type mediated by the APC/C complex. The sequence is that of Ubiquitin carboxyl-terminal hydrolase 37 (usp37) from Danio rerio (Zebrafish).